The following is a 642-amino-acid chain: 1-deoxy-D-xylulose-5-phosphate synthase (642 aa).

Residues His79 and 120–122 (AHS) each bind thiamine diphosphate. Position 151 (Asp151) interacts with Mg(2+). Thiamine diphosphate is bound by residues 152 to 153 (GS), Asn180, Tyr290, and Glu372. Position 180 (Asn180) interacts with Mg(2+).

Belongs to the transketolase family. DXPS subfamily. In terms of assembly, homodimer. Mg(2+) serves as cofactor. Thiamine diphosphate is required as a cofactor.

The enzyme catalyses D-glyceraldehyde 3-phosphate + pyruvate + H(+) = 1-deoxy-D-xylulose 5-phosphate + CO2. The protein operates within metabolic intermediate biosynthesis; 1-deoxy-D-xylulose 5-phosphate biosynthesis; 1-deoxy-D-xylulose 5-phosphate from D-glyceraldehyde 3-phosphate and pyruvate: step 1/1. Functionally, catalyzes the acyloin condensation reaction between C atoms 2 and 3 of pyruvate and glyceraldehyde 3-phosphate to yield 1-deoxy-D-xylulose-5-phosphate (DXP). This chain is 1-deoxy-D-xylulose-5-phosphate synthase, found in Beijerinckia indica subsp. indica (strain ATCC 9039 / DSM 1715 / NCIMB 8712).